The chain runs to 45 residues: Amphipathic peptide Hj0164 (45 aa).

The signal sequence occupies residues 1-23; that stretch reads MKSQAFFLLFLVVLLLATTQSEA. A Phenylalanine amide modification is found at F33. The propeptide occupies 37–45; that stretch reads SLRDVDTMK.

It belongs to the non-disulfide-bridged peptide (NDBP) superfamily. Short antimicrobial peptide (group 4) family. In terms of tissue distribution, expressed by the venom gland.

It localises to the secreted. The protein resides in the target cell membrane. Its function is as follows. Amphipathic peptide that shows antibacterial activities. In Hottentotta judaicus (Black scorpion), this protein is Amphipathic peptide Hj0164.